The sequence spans 560 residues: Membrane protein insertase YidC (560 aa).

A run of 6 helical transmembrane segments spans residues 5–25 (IINL…WQYF), 334–354 (AIDF…MNFF), 357–377 (YVGN…LLMF), 431–451 (LPIL…YVTI), 476–496 (LFGL…WPIL), and 522–542 (FMPL…LIYW).

It belongs to the OXA1/ALB3/YidC family. Type 1 subfamily. In terms of assembly, interacts with the Sec translocase complex via SecD. Specifically interacts with transmembrane segments of nascent integral membrane proteins during membrane integration.

It is found in the cell inner membrane. In terms of biological role, required for the insertion and/or proper folding and/or complex formation of integral membrane proteins into the membrane. Involved in integration of membrane proteins that insert both dependently and independently of the Sec translocase complex, as well as at least some lipoproteins. Aids folding of multispanning membrane proteins. This is Membrane protein insertase YidC from Rickettsia africae (strain ESF-5).